The sequence spans 745 residues: Cytoskeleton-associated protein 2-like (745 aa).

The interval alanine 25–serine 141 is disordered. Residues lysine 30–threonine 61 are compositionally biased toward polar residues. Positions serine 109 to serine 120 are enriched in low complexity. Residues phenylalanine 121–glutamate 133 show a composition bias toward polar residues. The KEN box motif lies at lysine 185–asparagine 187. A compositionally biased stretch (basic and acidic residues) spans leucine 192–leucine 203. Disordered regions lie at residues leucine 192–threonine 217, valine 256–arginine 276, and arginine 385–phenylalanine 411. Lysine 198 is covalently cross-linked (Glycyl lysine isopeptide (Lys-Gly) (interchain with G-Cter in SUMO1); alternate). Residue lysine 198 forms a Glycyl lysine isopeptide (Lys-Gly) (interchain with G-Cter in SUMO2); alternate linkage. Residue tyrosine 204 is modified to Phosphotyrosine. Polar residues predominate over residues alanine 389 to phenylalanine 411. Threonine 742 is modified (phosphothreonine). Serine 745 is modified (phosphoserine).

Belongs to the CKAP2 family. In terms of processing, ubiquitinated by the anaphase promoting complex/cyclosome (APC/C).

The protein resides in the cytoplasm. Its subcellular location is the cytoskeleton. It is found in the spindle pole. Its function is as follows. Microtubule-associated protein required for mitotic spindle formation and cell-cycle progression in neural progenitor cells. The polypeptide is Cytoskeleton-associated protein 2-like (CKAP2L) (Homo sapiens (Human)).